The sequence spans 135 residues: Small ribosomal subunit protein bS6 (135 aa).

The tract at residues Glu-98–Glu-135 is disordered. Basic and acidic residues predominate over residues Lys-104–Glu-122. Acidic residues predominate over residues Ala-123 to Glu-135.

It belongs to the bacterial ribosomal protein bS6 family.

Binds together with bS18 to 16S ribosomal RNA. The polypeptide is Small ribosomal subunit protein bS6 (Shewanella amazonensis (strain ATCC BAA-1098 / SB2B)).